Consider the following 1060-residue polypeptide: Anoctamin-8 (1060 aa).

The segment at 1–32 is disordered; sequence MAEAASGAGDVTLEGERGKRPPPEGEPAAPAS. Position 2 is an N-acetylalanine (Ala2). Topologically, residues 2–244 are cytoplasmic; that stretch reads AEAASGAGDV…DDICDYFGVK (243 aa). The segment covering 14 to 23 has biased composition (basic and acidic residues); sequence EGERGKRPPP. Residues 245–265 form a helical membrane-spanning segment; the sequence is IAMYFAWLGFYTSAMVYPAVF. Residues 266–281 are Extracellular-facing; it reads GSVLYTFTEADQTSRD. The helical transmembrane segment at 282 to 302 threads the bilayer; the sequence is VSCVVFALFNVIWSTLFLEEW. The Cytoplasmic segment spans residues 303-356; sequence KRRGAELAYKWGTLDSPGEAVEEPRPQFRGIRRISPITRAEEFYYPPWKRLLFQ. Phosphoserine is present on Ser318. A helical transmembrane segment spans residues 357–377; it reads LLVSLPLCLACLICVFILMLG. At 378-400 the chain is on the extracellular side; that stretch reads CFQLQELVLSVKGLPRLVRFLPK. Residues 401–421 form a helical membrane-spanning segment; it reads VMLALLVSVSAEGYKKLAVWL. The Cytoplasmic segment spans residues 422–437; sequence NDMENYRLESTYERHL. The helical transmembrane segment at 438–458 threads the bilayer; that stretch reads IIKVVLFQFVNSYLSLFYIGF. Over 459-745 the chain is Extracellular; the sequence is YLKDMDRLKE…YEDTFQDYQE (287 aa). Disordered regions lie at residues 529 to 605, 619 to 640, 653 to 672, and 680 to 723; these read AQAD…SLLD, GAGR…SPTM, AEED…EPQT, and GEGR…HSPQ. Positions 534–547 are enriched in gly residues; sequence GGAGSRRCLGGGCG. Composition is skewed to acidic residues over residues 549-559 and 581-602; these read PEEENEEEEEA and EEDE…EEGS. Ser665 is modified (phosphoserine). Over residues 680–694 the composition is skewed to basic and acidic residues; it reads GEGRDQGPDGDRDTE. The N-linked (GlcNAc...) asparagine glycan is linked to Asn708. Residues 746–766 traverse the membrane as a helical segment; the sequence is MFVQFGYVVLFSSAFPLAALC. Residues 767 to 802 are Cytoplasmic-facing; that stretch reads ALVNNLIEIRSDAFKLCTGLQRPFGRRVESIGQWQK. Ser796 carries the post-translational modification Phosphoserine. A helical transmembrane segment spans residues 803–823; it reads VMEAMGVLAIVVNCYLIGQCG. Topologically, residues 824 to 836 are extracellular; it reads QLQRLFPWLSPEA. Residues 837–857 traverse the membrane as a helical segment; it reads AIVSVVVLEHLALLVKYLIHV. Topologically, residues 858–1060 are cytoplasmic; it reads AIPDIPGWVA…PRPEDAGHRP (203 aa). Residues 884-1060 are disordered; the sequence is HERQAQQRFQ…PRPEDAGHRP (177 aa). 2 stretches are compositionally biased toward basic and acidic residues: residues 899-927 and 935-950; these read RREE…EARA and VAER…ERPR. The span at 972 to 986 shows a compositional bias: pro residues; the sequence is TRPPAPTGCAPPPRS. Asymmetric dimethylarginine; alternate is present on Arg991. The residue at position 991 (Arg991) is an Omega-N-methylarginine; alternate. Arg999 is modified (omega-N-methylarginine). Basic and acidic residues predominate over residues 1049 to 1060; the sequence is PEPRPEDAGHRP.

Belongs to the anoctamin family. As to expression, predominant expression seen in epithelial tissues.

It localises to the cell membrane. Does not exhibit calcium-activated chloride channel (CaCC) activity. This chain is Anoctamin-8 (Ano8), found in Mus musculus (Mouse).